A 140-amino-acid chain; its full sequence is ATP synthase epsilon chain (140 aa).

Belongs to the ATPase epsilon chain family. F-type ATPases have 2 components, CF(1) - the catalytic core - and CF(0) - the membrane proton channel. CF(1) has five subunits: alpha(3), beta(3), gamma(1), delta(1), epsilon(1). CF(0) has three main subunits: a, b and c.

Its subcellular location is the cell inner membrane. Functionally, produces ATP from ADP in the presence of a proton gradient across the membrane. The chain is ATP synthase epsilon chain from Neisseria gonorrhoeae (strain ATCC 700825 / FA 1090).